The primary structure comprises 187 residues: Adenylate kinase (187 aa).

10 to 15 (GSGKGT) provides a ligand contact to ATP. The segment at 30 to 59 (STGDLLRAEVAAGSPLGVKAKEVMARGDLV) is NMP. Residues T31, R36, 57-59 (DLV), 85-88 (GYPR), and Q92 each bind AMP. The segment at 126-136 (GRAKAEGREDD) is LID. Residue R127 coordinates ATP. Positions 133 and 144 each coordinate AMP. An ATP-binding site is contributed by G172.

Belongs to the adenylate kinase family. In terms of assembly, monomer.

It is found in the cytoplasm. It catalyses the reaction AMP + ATP = 2 ADP. Its pathway is purine metabolism; AMP biosynthesis via salvage pathway; AMP from ADP: step 1/1. Functionally, catalyzes the reversible transfer of the terminal phosphate group between ATP and AMP. Plays an important role in cellular energy homeostasis and in adenine nucleotide metabolism. The protein is Adenylate kinase of Xanthomonas campestris pv. campestris (strain B100).